The chain runs to 951 residues: Pheromone-regulated membrane protein 10 (951 aa).

3 stretches are compositionally biased toward polar residues: residues 1–10 (MSSSYGNNGD), 68–84 (GGST…NVGS), and 92–104 (RTAS…NRRQ). 3 disordered regions span residues 1–293 (MSSS…EDPI), 313–366 (AGKS…TMVS), and 433–487 (NDSS…LPNF). Positions 126–135 (DDDDEEEEEH) are enriched in acidic residues. Residues 219 to 234 (PHQETNDGRNSAESHS) are compositionally biased toward basic and acidic residues. Polar residues-rich tracts occupy residues 318 to 332 (PGTQ…SSEH), 354 to 366 (PFNQ…TMVS), and 468 to 484 (SQTN…SMNL). 10 helical membrane passes run 635–655 (WVSV…AFGG), 657–677 (WINM…QFIV), 687–707 (VFEV…GSIP), 711–731 (ICFG…YIIL), 753–773 (IIYS…FGWI), 786–806 (NISP…LGLI), 811–831 (WTQL…TYFS), 841–861 (FTSA…SRIW), 863–883 (GFAV…GVAS), and 918–938 (VTMI…TLFI).

Belongs to the ThrE exporter (TC 2.A.79) family.

Its subcellular location is the membrane. The sequence is that of Pheromone-regulated membrane protein 10 from Kluyveromyces lactis (strain ATCC 8585 / CBS 2359 / DSM 70799 / NBRC 1267 / NRRL Y-1140 / WM37) (Yeast).